Reading from the N-terminus, the 466-residue chain is Ribulose bisphosphate carboxylase large chain (466 aa).

Lys5 bears the N6,N6,N6-trimethyllysine mark. Substrate is bound by residues Asn114 and Thr164. Lys166 (proton acceptor) is an active-site residue. Substrate is bound at residue Lys168. Residues Lys192, Asp194, and Glu195 each coordinate Mg(2+). Lys192 is modified (N6-carboxylysine). His285 acts as the Proton acceptor in catalysis. The substrate site is built by Arg286, His318, and Ser370.

Belongs to the RuBisCO large chain family. Type I subfamily. In terms of assembly, heterohexadecamer of 8 large chains and 8 small chains; disulfide-linked. The disulfide link is formed within the large subunit homodimers. Requires Mg(2+) as cofactor. The disulfide bond which can form in the large chain dimeric partners within the hexadecamer appears to be associated with oxidative stress and protein turnover.

It localises to the plastid. The protein localises to the chloroplast. It catalyses the reaction 2 (2R)-3-phosphoglycerate + 2 H(+) = D-ribulose 1,5-bisphosphate + CO2 + H2O. The enzyme catalyses D-ribulose 1,5-bisphosphate + O2 = 2-phosphoglycolate + (2R)-3-phosphoglycerate + 2 H(+). Its function is as follows. RuBisCO catalyzes two reactions: the carboxylation of D-ribulose 1,5-bisphosphate, the primary event in carbon dioxide fixation, as well as the oxidative fragmentation of the pentose substrate in the photorespiration process. Both reactions occur simultaneously and in competition at the same active site. In Thespesia populnea (Portia tree), this protein is Ribulose bisphosphate carboxylase large chain.